Consider the following 264-residue polypeptide: Proteasome assembly chaperone 2 (264 aa).

Thr-137 is subject to Phosphothreonine.

This sequence belongs to the PSMG2 family. Forms a heterodimer with PSMG1. The PSMG1-PSMG2 heterodimer interacts directly with the PSMA5 and PSMA7 proteasome alpha subunits. In terms of processing, degraded by the proteasome upon completion of 20S proteasome maturation. In terms of tissue distribution, widely expressed with highest levels in lung, brain and colon. Moderately expressed in muscle, stomach, spleen and heart. Weakly expressed in small intestine, pancreas and liver. Highly expressed in hepatocellular carcinomas with low levels in surrounding liver tissue.

The protein localises to the nucleus. Chaperone protein which promotes assembly of the 20S proteasome as part of a heterodimer with PSMG1. The PSMG1-PSMG2 heterodimer binds to the PSMA5 and PSMA7 proteasome subunits, promotes assembly of the proteasome alpha subunits into the heteroheptameric alpha ring and prevents alpha ring dimerization. This is Proteasome assembly chaperone 2 from Homo sapiens (Human).